We begin with the raw amino-acid sequence, 98 residues long: NADH-ubiquinone oxidoreductase chain 4L (98 aa).

A run of 3 helical transmembrane segments spans residues 1 to 21 (MTLI…GLLM), 29 to 49 (ALLC…LTIL), and 61 to 81 (IILL…LVMV).

It belongs to the complex I subunit 4L family. In terms of assembly, core subunit of respiratory chain NADH dehydrogenase (Complex I) which is composed of 45 different subunits.

It localises to the mitochondrion inner membrane. The enzyme catalyses a ubiquinone + NADH + 5 H(+)(in) = a ubiquinol + NAD(+) + 4 H(+)(out). Its function is as follows. Core subunit of the mitochondrial membrane respiratory chain NADH dehydrogenase (Complex I) which catalyzes electron transfer from NADH through the respiratory chain, using ubiquinone as an electron acceptor. Part of the enzyme membrane arm which is embedded in the lipid bilayer and involved in proton translocation. This Eschrichtius robustus (California gray whale) protein is NADH-ubiquinone oxidoreductase chain 4L (MT-ND4L).